Reading from the N-terminus, the 682-residue chain is Methionine--tRNA ligase (682 aa).

A 'HIGH' region motif is present at residues 14-24; sequence PYANGSIHLGH. 4 residues coordinate Zn(2+): Cys145, Cys148, Cys158, and Cys161. Positions 331–335 match the 'KMSKS' region motif; the sequence is KMSKS. Lys334 serves as a coordination point for ATP. One can recognise a tRNA-binding domain in the interval 580-682; sequence AFAAIDLRVA…SGARPGQRIK (103 aa).

It belongs to the class-I aminoacyl-tRNA synthetase family. MetG type 1 subfamily. As to quaternary structure, homodimer. Requires Zn(2+) as cofactor.

It localises to the cytoplasm. The catalysed reaction is tRNA(Met) + L-methionine + ATP = L-methionyl-tRNA(Met) + AMP + diphosphate. Its function is as follows. Is required not only for elongation of protein synthesis but also for the initiation of all mRNA translation through initiator tRNA(fMet) aminoacylation. The chain is Methionine--tRNA ligase from Pseudomonas syringae pv. syringae (strain B728a).